The primary structure comprises 194 residues: Peptidyl-tRNA hydrolase (194 aa).

Tyrosine 16 serves as a coordination point for tRNA. The active-site Proton acceptor is histidine 21. The tRNA site is built by tyrosine 67, asparagine 69, and asparagine 115.

Belongs to the PTH family. As to quaternary structure, monomer.

It is found in the cytoplasm. It catalyses the reaction an N-acyl-L-alpha-aminoacyl-tRNA + H2O = an N-acyl-L-amino acid + a tRNA + H(+). Functionally, hydrolyzes ribosome-free peptidyl-tRNAs (with 1 or more amino acids incorporated), which drop off the ribosome during protein synthesis, or as a result of ribosome stalling. In terms of biological role, catalyzes the release of premature peptidyl moieties from peptidyl-tRNA molecules trapped in stalled 50S ribosomal subunits, and thus maintains levels of free tRNAs and 50S ribosomes. The protein is Peptidyl-tRNA hydrolase of Synechocystis sp. (strain ATCC 27184 / PCC 6803 / Kazusa).